We begin with the raw amino-acid sequence, 264 residues long: Apolipoprotein A-I (264 aa).

A signal peptide spans Met-1–Ala-18. 2 consecutive repeat copies span residues Leu-67–Gly-88 and Leu-89–Ser-110. The segment at Leu-67–Gln-264 is 10 X approximate tandem repeats. Residues Glu-111–Gln-121 form a 3; half-length repeat. 5 repeat units span residues Pro-122–Arg-143, Pro-144–Thr-165, Pro-166–Ala-187, Pro-188–Ser-207, and Ala-208–Lys-229. Residue Met-193 is modified to Methionine sulfoxide. Residues Pro-230–Leu-240 form a 9; half-length repeat. Residues Pro-241–Gln-264 form repeat 10.

It belongs to the apolipoprotein A1/A4/E family. In terms of assembly, homodimer. Interacts with APOA1BP and CLU. Component of a sperm activating protein complex (SPAP), consisting of APOA1, an immunoglobulin heavy chain, an immunoglobulin light chain and albumin. Interacts with NDRG1. Interacts with SCGB3A2. Interacts with NAXE and YJEFN3. In terms of processing, glycosylated. Palmitoylated. Post-translationally, phosphorylation sites are present in the extracellular medium.

It is found in the secreted. Participates in the reverse transport of cholesterol from tissues to the liver for excretion by promoting cholesterol efflux from tissues and by acting as a cofactor for the lecithin cholesterol acyltransferase (LCAT). As part of the SPAP complex, activates spermatozoa motility. This is Apolipoprotein A-I (APOA1) from Cavia porcellus (Guinea pig).